The chain runs to 178 residues: Peptide deformylase (178 aa).

Residues C96 and H138 each coordinate Fe cation. Residue E139 is part of the active site. H142 serves as a coordination point for Fe cation.

The protein belongs to the polypeptide deformylase family. Fe(2+) serves as cofactor.

The enzyme catalyses N-terminal N-formyl-L-methionyl-[peptide] + H2O = N-terminal L-methionyl-[peptide] + formate. Removes the formyl group from the N-terminal Met of newly synthesized proteins. Requires at least a dipeptide for an efficient rate of reaction. N-terminal L-methionine is a prerequisite for activity but the enzyme has broad specificity at other positions. The sequence is that of Peptide deformylase from Bartonella tribocorum (strain CIP 105476 / IBS 506).